A 140-amino-acid polypeptide reads, in one-letter code: 3-hydroxyacyl-[acyl-carrier-protein] dehydratase FabZ (140 aa).

His-47 is a catalytic residue.

The protein belongs to the thioester dehydratase family. FabZ subfamily.

The protein localises to the cytoplasm. It catalyses the reaction a (3R)-hydroxyacyl-[ACP] = a (2E)-enoyl-[ACP] + H2O. Involved in unsaturated fatty acids biosynthesis. Catalyzes the dehydration of short chain beta-hydroxyacyl-ACPs and long chain saturated and unsaturated beta-hydroxyacyl-ACPs. This Streptococcus uberis (strain ATCC BAA-854 / 0140J) protein is 3-hydroxyacyl-[acyl-carrier-protein] dehydratase FabZ.